Reading from the N-terminus, the 128-residue chain is Nanos homolog 1 (128 aa).

The segment at 7–23 (FNSWSDYLGLSSLISRG) is essential for its translational repressor activity. Residues 23 to 58 (GLQPREGGESPRPRWKASSPTPAEPLPSKAAEAHGH) are disordered. The segment at 60 to 114 (GCGFCRSNREAQSLYSSHRLRAPDGRVLCPVLRGYTCPLCGANGDWAHTMRYCPL) adopts a Nanos-type zinc-finger fold. The Zn(2+) site is built by cysteine 61, cysteine 64, histidine 77, cysteine 88, cysteine 96, cysteine 99, histidine 107, and cysteine 112. 2 short sequence motifs (C2HC) span residues 61 to 88 (CGFCRSNREAQSLYSSHRLRAPDGRVLC) and 96 to 112 (CPLCGANGDWAHTMRYC).

The protein belongs to the nanos family. As to quaternary structure, interacts with ccnb1.

It is found in the cytoplasm. It localises to the perinuclear region. Functionally, acts as a translational repressor. Can mediate repression affecting different steps in the translation process: cap-driven, IRES-driven, polyadenylated RNAs or nonpolyadenylated RNAs. Essential for the development of primordial germ cells (PGCs) by ensuring their proper migration and survival. The polypeptide is Nanos homolog 1 (nanos1) (Xenopus tropicalis (Western clawed frog)).